Here is a 430-residue protein sequence, read N- to C-terminus: uncharacterized protein (430 aa).

2 helical membrane passes run 20-40 (YLCL…GIMP) and 405-425 (YIWW…LLVI).

Its subcellular location is the membrane. This is an uncharacterized protein from Schizosaccharomyces pombe (strain 972 / ATCC 24843) (Fission yeast).